Consider the following 530-residue polypeptide: uncharacterized protein (530 aa).

Polar residues-rich tracts occupy residues 60 to 74 and 92 to 103; these read LNESSLRSQQESSTP and GQGTSRPLPTLS. Disordered regions lie at residues 60-103 and 121-155; these read LNES…PTLS and ASSTNEPQELPDPRDAPREGSFRLDGNQSEFGLGN. Residues 131–142 show a composition bias toward basic and acidic residues; the sequence is PDPRDAPREGSF.

This is an uncharacterized protein from Mus musculus (Mouse).